A 1034-amino-acid polypeptide reads, in one-letter code: FACT complex subunit spt-16 (1034 aa).

Basic and acidic residues-rich tracts occupy residues 433 to 448, 463 to 481, and 493 to 503; these read EEQENRETERDTDQKK, TRNKTTNEDLRKERQKELG, and SKQDGGTDEKK. A disordered region spans residues 433-511; it reads EEQENRETER…KKVKKSNVSY (79 aa). The stretch at 617 to 642 forms a coiled coil; sequence LSTAFRQIKEMQKRFRTEEAEEREKD. Composition is skewed to acidic residues over residues 926-950 and 959-983; these read AESEGEDAGDDSDESDAYDPEEADA and SDEDESEGEETESDDDEEGSLDSDE. A disordered region spans residues 926–1034; the sequence is AESEGEDAGD…KAGPSHKRRK (109 aa). Over residues 984 to 1020 the composition is skewed to basic and acidic residues; it reads SEGKDWSDLEEEAAKADKRREVEDGGRDRDRDRDRKR. Basic residues predominate over residues 1021–1034; sequence PSSSKAGPSHKRRK.

It belongs to the peptidase M24 family. SPT16 subfamily. As to quaternary structure, component of the FACT complex, a stable heterodimer of spt-16 and hmg-3 or hmg-4.

The protein localises to the nucleus. Its subcellular location is the chromosome. Component of the FACT complex, a general chromatin factor that acts to reorganize nucleosomes. The FACT complex is involved in multiple processes that require DNA as a template such as mRNA elongation, DNA replication and DNA repair. During transcription elongation the FACT complex acts as a histone chaperone that both destabilizes and restores nucleosomal structure. It facilitates the passage of RNA polymerase II and transcription by promoting the dissociation of one histone H2A-H2B dimer from the nucleosome, then subsequently promotes the reestablishment of the nucleosome following the passage of RNA polymerase II. The chain is FACT complex subunit spt-16 (spt-16) from Caenorhabditis briggsae.